Here is a 118-residue protein sequence, read N- to C-terminus: Large ribosomal subunit protein uL18 (118 aa).

It belongs to the universal ribosomal protein uL18 family. As to quaternary structure, part of the 50S ribosomal subunit; part of the 5S rRNA/L5/L18/L25 subcomplex. Contacts the 5S and 23S rRNAs.

Its function is as follows. This is one of the proteins that bind and probably mediate the attachment of the 5S RNA into the large ribosomal subunit, where it forms part of the central protuberance. The protein is Large ribosomal subunit protein uL18 of Levilactobacillus brevis (strain ATCC 367 / BCRC 12310 / CIP 105137 / JCM 1170 / LMG 11437 / NCIMB 947 / NCTC 947) (Lactobacillus brevis).